Reading from the N-terminus, the 480-residue chain is DnaJ homolog subfamily A member 3, mitochondrial (480 aa).

R58 bears the Omega-N-methylarginine; by CARM1 mark. The J domain occupies 93 to 158 (DYYQILGVPR…VKRKQYDAYG (66 aa)). K134 is subject to N6-acetyllysine. A CR-type zinc finger spans residues 223–301 (GVNKEFTVNI…CRGAGQAKQK (79 aa)). Residue C236 participates in Zn(2+) binding. CXXCXGXG motif repeat units lie at residues 236 to 243 (CERCDGKG), 253 to 260 (CHYCGGSG), 275 to 282 (CRRCGGRG), and 289 to 296 (CVVCRGAG). R238 bears the Omega-N-methylarginine; by CARM1 mark. Zn(2+)-binding residues include C239, C253, C256, C275, C278, C289, and C292. R293 is modified (omega-N-methylarginine; by CARM1). S398 carries the phosphoserine modification. The interval 437–468 (TVNGVTHTSTGGRTMDSSAGSKDRREAGEDNE) is disordered. Polar residues predominate over residues 439–456 (NGVTHTSTGGRTMDSSAG).

As to quaternary structure, interacts with JAK2, HSPA9B and IFN-gammaR2 chain. Interacts with Ras GTPase-activating protein 1 (RASA1). Isoform 2 interacts with MUSK (via the cytoplasmic domain). In terms of processing, tyrosine phosphorylated.

It localises to the mitochondrion matrix. Its subcellular location is the cytoplasm. The protein resides in the cytosol. It is found in the postsynaptic cell membrane. Modulates apoptotic signal transduction or effector structures within the mitochondrial matrix. Affect cytochrome C release from the mitochondria and caspase 3 activation, but not caspase 8 activation. Isoform 1 increases apoptosis triggered by both TNF and the DNA-damaging agent mytomycin C; in sharp contrast, isoform 2 suppresses apoptosis. Can modulate IFN-gamma-mediated transcriptional activity. Isoform 2 may play a role in neuromuscular junction development as an effector of the MUSK signaling pathway. The sequence is that of DnaJ homolog subfamily A member 3, mitochondrial (Dnaja3) from Mus musculus (Mouse).